Reading from the N-terminus, the 1220-residue chain is Deubiquitinating protein VCPIP1 (1220 aa).

Residues 1-19 (MSQPPPPPPLPPPPPPPEA) show a composition bias toward pro residues. A disordered region spans residues 1–40 (MSQPPPPPPLPPPPPPPEAPQTSSSLAAAASPGGLSKRRD). Residues 20 to 35 (PQTSSSLAAAASPGGL) show a composition bias toward low complexity. An OTU domain is found at 207 to 360 (LIPVHVDGDG…RNHYIPLVGI (154 aa)). The active site involves aspartate 215. Cysteine 218 functions as the Nucleophile in the catalytic mechanism. Residue histidine 353 is part of the active site. Residue lysine 407 is modified to N6-acetyllysine. 2 disordered regions span residues 724 to 778 (SVMQ…KIRI) and 988 to 1008 (EATTRSRESSPSHGLLKLGSG). Phosphoserine occurs at positions 746 and 756. The segment covering 754–770 (PSSAPATPTKAPYSPTT) has biased composition (low complexity). Phosphothreonine is present on threonine 762. Residues serine 767, serine 993, serine 997, and serine 1076 each carry the phosphoserine modification. Disordered regions lie at residues 1113-1140 (SSIQASMDKHLRDQSAEQAPSDLSQRKV) and 1185-1220 (FATRSKAQKENSMEEPEEMDSQDAETTNTTEPMDHS). Phosphoserine is present on residues serine 1196 and serine 1205. A compositionally biased stretch (acidic residues) spans 1197–1207 (MEEPEEMDSQD). The segment covering 1208–1220 (AETTNTTEPMDHS) has biased composition (polar residues).

Binds VCP and the ternary complex containing STX5A, NSFL1C and VCP. Phosphorylated at Ser-1205 by ATM or ATR following induction of covalent DNA-protein cross-links (DPCs).

The protein resides in the nucleus. The protein localises to the cytoplasm. Its subcellular location is the endoplasmic reticulum. It is found in the golgi apparatus. It localises to the golgi stack. It catalyses the reaction Thiol-dependent hydrolysis of ester, thioester, amide, peptide and isopeptide bonds formed by the C-terminal Gly of ubiquitin (a 76-residue protein attached to proteins as an intracellular targeting signal).. In terms of biological role, deubiquitinating enzyme involved in DNA repair and reassembly of the Golgi apparatus and the endoplasmic reticulum following mitosis. Necessary for VCP-mediated reassembly of Golgi stacks after mitosis. Plays a role in VCP-mediated formation of transitional endoplasmic reticulum (tER). Mediates dissociation of the ternary complex containing STX5A, NSFL1C and VCP. Also involved in DNA repair following phosphorylation by ATM or ATR: acts by catalyzing deubiquitination of SPRTN, thereby promoting SPRTN recruitment to chromatin and subsequent proteolytic cleavage of covalent DNA-protein cross-links (DPCs). Hydrolyzes 'Lys-11'- and 'Lys-48'-linked polyubiquitin chains. The polypeptide is Deubiquitinating protein VCPIP1 (Mus musculus (Mouse)).